Reading from the N-terminus, the 243-residue chain is 1-(5-phosphoribosyl)-5-[(5-phosphoribosylamino)methylideneamino] imidazole-4-carboxamide isomerase (243 aa).

The active-site Proton acceptor is Asp-8. Asp-130 acts as the Proton donor in catalysis.

Belongs to the HisA/HisF family.

It localises to the cytoplasm. It carries out the reaction 1-(5-phospho-beta-D-ribosyl)-5-[(5-phospho-beta-D-ribosylamino)methylideneamino]imidazole-4-carboxamide = 5-[(5-phospho-1-deoxy-D-ribulos-1-ylimino)methylamino]-1-(5-phospho-beta-D-ribosyl)imidazole-4-carboxamide. It functions in the pathway amino-acid biosynthesis; L-histidine biosynthesis; L-histidine from 5-phospho-alpha-D-ribose 1-diphosphate: step 4/9. The protein is 1-(5-phosphoribosyl)-5-[(5-phosphoribosylamino)methylideneamino] imidazole-4-carboxamide isomerase of Methylococcus capsulatus (strain ATCC 33009 / NCIMB 11132 / Bath).